The sequence spans 360 residues: Peptide chain release factor 1 (360 aa).

Gln-235 bears the N5-methylglutamine mark. The tract at residues 285–313 (KRQQAEASTRRNLLGSGDRSDRNRTYNFP) is disordered.

This sequence belongs to the prokaryotic/mitochondrial release factor family. Post-translationally, methylated by PrmC. Methylation increases the termination efficiency of RF1.

Its subcellular location is the cytoplasm. In terms of biological role, peptide chain release factor 1 directs the termination of translation in response to the peptide chain termination codons UAG and UAA. In Klebsiella pneumoniae (strain 342), this protein is Peptide chain release factor 1.